Here is a 117-residue protein sequence, read N- to C-terminus: Ribonuclease P protein component (117 aa).

The protein belongs to the RnpA family. Consists of a catalytic RNA component (M1 or rnpB) and a protein subunit.

It carries out the reaction Endonucleolytic cleavage of RNA, removing 5'-extranucleotides from tRNA precursor.. RNaseP catalyzes the removal of the 5'-leader sequence from pre-tRNA to produce the mature 5'-terminus. It can also cleave other RNA substrates such as 4.5S RNA. The protein component plays an auxiliary but essential role in vivo by binding to the 5'-leader sequence and broadening the substrate specificity of the ribozyme. The sequence is that of Ribonuclease P protein component from Thermotoga maritima (strain ATCC 43589 / DSM 3109 / JCM 10099 / NBRC 100826 / MSB8).